Reading from the N-terminus, the 121-residue chain is Large ribosomal subunit protein bL12 (121 aa).

Belongs to the bacterial ribosomal protein bL12 family. As to quaternary structure, homodimer. Part of the ribosomal stalk of the 50S ribosomal subunit. Forms a multimeric L10(L12)X complex, where L10 forms an elongated spine to which 2 to 4 L12 dimers bind in a sequential fashion. Binds GTP-bound translation factors.

Functionally, forms part of the ribosomal stalk which helps the ribosome interact with GTP-bound translation factors. Is thus essential for accurate translation. The sequence is that of Large ribosomal subunit protein bL12 from Clostridium novyi (strain NT).